The sequence spans 216 residues: Acyl-homoserine-lactone synthase (216 aa).

This sequence belongs to the autoinducer synthase family.

The enzyme catalyses a fatty acyl-[ACP] + S-adenosyl-L-methionine = an N-acyl-L-homoserine lactone + S-methyl-5'-thioadenosine + holo-[ACP] + H(+). In terms of biological role, required for the synthesis of OHHL (N-(3-oxohexanoyl)-L-homoserine lactone), an autoinducer molecule which binds to a yet uncharacterized transcriptional regulator. This is Acyl-homoserine-lactone synthase (eagI) from Enterobacter agglomerans (Erwinia herbicola).